A 338-amino-acid polypeptide reads, in one-letter code: Lipoate-protein ligase A (338 aa).

Positions 29-216 constitute a BPL/LPL catalytic domain; the sequence is PATQRVLFLW…AFFAHYGERV (188 aa). ATP is bound by residues Arg-71, 76 to 79, and Lys-134; that span reads GAVF. Position 134 (Lys-134) interacts with (R)-lipoate.

The protein belongs to the LplA family. As to quaternary structure, monomer.

It localises to the cytoplasm. The enzyme catalyses L-lysyl-[lipoyl-carrier protein] + (R)-lipoate + ATP = N(6)-[(R)-lipoyl]-L-lysyl-[lipoyl-carrier protein] + AMP + diphosphate + H(+). It participates in protein modification; protein lipoylation via exogenous pathway; protein N(6)-(lipoyl)lysine from lipoate: step 1/2. Its pathway is protein modification; protein lipoylation via exogenous pathway; protein N(6)-(lipoyl)lysine from lipoate: step 2/2. Catalyzes both the ATP-dependent activation of exogenously supplied lipoate to lipoyl-AMP and the transfer of the activated lipoyl onto the lipoyl domains of lipoate-dependent enzymes. In Escherichia coli (strain SMS-3-5 / SECEC), this protein is Lipoate-protein ligase A.